The chain runs to 548 residues: Chaperonin GroEL (548 aa).

ATP contacts are provided by residues Thr29 to Pro32, Asp86 to Thr90, Gly413, Asn476 to Leu478, and Asp492. Residues Pro522 to Asp531 show a composition bias toward acidic residues. The tract at residues Pro522 to Met548 is disordered. Gly residues predominate over residues Met532–Met548.

The protein belongs to the chaperonin (HSP60) family. Forms a cylinder of 14 subunits composed of two heptameric rings stacked back-to-back. Interacts with the co-chaperonin GroES.

Its subcellular location is the cytoplasm. It catalyses the reaction ATP + H2O + a folded polypeptide = ADP + phosphate + an unfolded polypeptide.. Its function is as follows. Together with its co-chaperonin GroES, plays an essential role in assisting protein folding. The GroEL-GroES system forms a nano-cage that allows encapsulation of the non-native substrate proteins and provides a physical environment optimized to promote and accelerate protein folding. The polypeptide is Chaperonin GroEL (Natranaerobius thermophilus (strain ATCC BAA-1301 / DSM 18059 / JW/NM-WN-LF)).